The following is a 238-amino-acid chain: Tetrahydromethanopterin S-methyltransferase subunit A 1 (238 aa).

The Cytoplasmic segment spans residues 2 to 218 (VEKKSPAEGW…RMFAGMYSGK (217 aa)). His-84 provides a ligand contact to 5-hydroxybenzimidazolylcob(I)amide. A helical membrane pass occupies residues 219–237 (VQGIMIGLAFTLTLGILLL). Position 238 (Val-238) is a topological domain, extracellular.

Belongs to the MtrA family. In terms of assembly, the complex is composed of 8 subunits; MtrA, MtrB, MtrC, MtrD, MtrE, MtrF, MtrG and MtrH. 5-hydroxybenzimidazolylcob(I)amide is required as a cofactor.

Its subcellular location is the cell membrane. The enzyme catalyses 5-methyl-5,6,7,8-tetrahydromethanopterin + coenzyme M + 2 Na(+)(in) = 5,6,7,8-tetrahydromethanopterin + methyl-coenzyme M + 2 Na(+)(out). The protein operates within one-carbon metabolism; methanogenesis from CO(2); methyl-coenzyme M from 5,10-methylene-5,6,7,8-tetrahydromethanopterin: step 2/2. Its function is as follows. Part of a complex that catalyzes the formation of methyl-coenzyme M and tetrahydromethanopterin from coenzyme M and methyl-tetrahydromethanopterin. This is an energy-conserving, sodium-ion translocating step. The chain is Tetrahydromethanopterin S-methyltransferase subunit A 1 from Methanothermobacter marburgensis (strain ATCC BAA-927 / DSM 2133 / JCM 14651 / NBRC 100331 / OCM 82 / Marburg) (Methanobacterium thermoautotrophicum).